Consider the following 946-residue polypeptide: Bifunctional glutamine synthetase adenylyltransferase/adenylyl-removing enzyme (946 aa).

An adenylyl removase region spans residues 1 to 441 (MSLLNDAALH…EFNWVIGDDE (441 aa)). Residues 448-946 (DQALSELWAL…VIKIWEKFLD (499 aa)) are adenylyl transferase.

The protein belongs to the GlnE family. Mg(2+) is required as a cofactor.

The catalysed reaction is [glutamine synthetase]-O(4)-(5'-adenylyl)-L-tyrosine + phosphate = [glutamine synthetase]-L-tyrosine + ADP. It catalyses the reaction [glutamine synthetase]-L-tyrosine + ATP = [glutamine synthetase]-O(4)-(5'-adenylyl)-L-tyrosine + diphosphate. Functionally, involved in the regulation of glutamine synthetase GlnA, a key enzyme in the process to assimilate ammonia. When cellular nitrogen levels are high, the C-terminal adenylyl transferase (AT) inactivates GlnA by covalent transfer of an adenylyl group from ATP to specific tyrosine residue of GlnA, thus reducing its activity. Conversely, when nitrogen levels are low, the N-terminal adenylyl removase (AR) activates GlnA by removing the adenylyl group by phosphorolysis, increasing its activity. The regulatory region of GlnE binds the signal transduction protein PII (GlnB) which indicates the nitrogen status of the cell. The chain is Bifunctional glutamine synthetase adenylyltransferase/adenylyl-removing enzyme from Psychromonas ingrahamii (strain DSM 17664 / CCUG 51855 / 37).